The chain runs to 535 residues: Dimethylaniline monooxygenase [N-oxide-forming] 2 (535 aa).

Ala-2 carries the post-translational modification N-acetylalanine. Residues 9–13 (GAGVS), Glu-32, 40–41 (LW), and 61–62 (NT) contribute to the FAD site. NADP(+) contacts are provided by residues 60-61 (TN) and 195-198 (SASD). Residue Lys-492 forms a Glycyl lysine isopeptide (Lys-Gly) (interchain with G-Cter in SUMO) linkage. Residues 510-530 (LSASFLMKILALVAVFVAFFS) form a helical membrane-spanning segment.

Belongs to the FMO family. FAD is required as a cofactor. Mg(2+) serves as cofactor. In terms of tissue distribution, lung.

Its subcellular location is the microsome membrane. It is found in the endoplasmic reticulum membrane. Its function is as follows. Catalyzes the oxidative metabolism of numerous xenobiotics, including mainly therapeutic drugs and insecticides that contain a soft nucleophile, most commonly nitrogen and sulfur and participates to their bioactivation. The polypeptide is Dimethylaniline monooxygenase [N-oxide-forming] 2 (Cavia porcellus (Guinea pig)).